The sequence spans 318 residues: Very-long-chain 3-oxoacyl-CoA reductase-A (318 aa).

Residues 15–35 (FWYLGVLAAAWWGLRAACCLL) traverse the membrane as a helical segment. 54–83 (GKWAVVTGATDGIGKAYAEELARRGMSIVL) is a binding site for NADP(+). 2 consecutive transmembrane segments (helical) span residues 187-207 (GVIL…LTVY) and 281-301 (AIMG…SMGM). S194 provides a ligand contact to substrate. Residue Y207 is the Proton acceptor of the active site.

It belongs to the short-chain dehydrogenases/reductases (SDR) family. 17-beta-HSD 3 subfamily.

The protein resides in the endoplasmic reticulum membrane. It carries out the reaction a very-long-chain (3R)-3-hydroxyacyl-CoA + NADP(+) = a very-long-chain 3-oxoacyl-CoA + NADPH + H(+). The enzyme catalyses 17beta-estradiol + NAD(+) = estrone + NADH + H(+). The catalysed reaction is 17beta-estradiol + NADP(+) = estrone + NADPH + H(+). It participates in lipid metabolism; fatty acid biosynthesis. The protein operates within steroid biosynthesis; estrogen biosynthesis. Functionally, catalyzes the second of the four reactions of the long-chain fatty acids elongation cycle. This endoplasmic reticulum-bound enzymatic process, allows the addition of two carbons to the chain of long- and very long-chain fatty acids/VLCFAs per cycle. This enzyme has a 3-ketoacyl-CoA reductase activity, reducing 3-ketoacyl-CoA to 3-hydroxyacyl-CoA, within each cycle of fatty acid elongation. Thereby, it may participate in the production of VLCFAs of different chain lengths that are involved in multiple biological processes as precursors of membrane lipids and lipid mediators. May also catalyze the transformation of estrone (E1) into estradiol (E2) and play a role in estrogen formation. This is Very-long-chain 3-oxoacyl-CoA reductase-A (hsd17b12-a) from Xenopus laevis (African clawed frog).